The sequence spans 219 residues: Probable nicotinate-nucleotide adenylyltransferase (219 aa).

Belongs to the NadD family.

It catalyses the reaction nicotinate beta-D-ribonucleotide + ATP + H(+) = deamido-NAD(+) + diphosphate. Its pathway is cofactor biosynthesis; NAD(+) biosynthesis; deamido-NAD(+) from nicotinate D-ribonucleotide: step 1/1. In terms of biological role, catalyzes the reversible adenylation of nicotinate mononucleotide (NaMN) to nicotinic acid adenine dinucleotide (NaAD). In Pseudoalteromonas atlantica (strain T6c / ATCC BAA-1087), this protein is Probable nicotinate-nucleotide adenylyltransferase.